The chain runs to 811 residues: Zinc finger CCCH domain-containing protein 11A (811 aa).

C3H1-type zinc fingers lie at residues 2-30 (PNQG…HCEA), 32-58 (LGNE…HMEI), and 61-87 (KRSE…HHNR). Ser109 is subject to Phosphoserine. Residues Lys115 and Lys125 each participate in a glycyl lysine isopeptide (Lys-Gly) (interchain with G-Cter in SUMO2) cross-link. Ser133 is subject to Phosphoserine. Disordered stretches follow at residues 140–195 (MKVE…GLRV), 224–258 (KKMK…KENV), 286–352 (GKRK…EKVN), and 368–434 (ERAS…TCIK). Residue Lys141 forms a Glycyl lysine isopeptide (Lys-Gly) (interchain with G-Cter in SUMO2) linkage. Residues Ser150 and Ser172 each carry the phosphoserine modification. The segment covering 161-176 (ADDDEDDDDQFSEEGD) has biased composition (acidic residues). Phosphoserine is present on Ser291. Basic and acidic residues-rich tracts occupy residues 310–323 (KKVE…DKTP) and 368–391 (ERAS…KTDD). Thr322 carries the post-translational modification Phosphothreonine. Residues 363-424 (EEILLERASQ…KHRQQEAERQ (62 aa)) adopt a coiled-coil conformation. Ser371 carries the post-translational modification Phosphoserine. Residues 392 to 403 (STSGARSSSTIR) are compositionally biased toward polar residues. Over residues 418-434 (QQEAERQKSKKDTTCIK) the composition is skewed to basic and acidic residues. Residue Lys479 forms a Glycyl lysine isopeptide (Lys-Gly) (interchain with G-Cter in SUMO2) linkage. Residues 483-550 (ALRVQQSSES…KEASGETTGV (68 aa)) are disordered. The segment covering 487–499 (QQSSESSTSSPSQ) has biased composition (low complexity). Lys620 participates in a covalent cross-link: Glycyl lysine isopeptide (Lys-Gly) (interchain with G-Cter in SUMO2). Residues 716-769 (TVPEAENPRDSLVLPPTQSSSDSSPPEVSGPSSSQMSMKTRRLSSASTGKPQLS) are disordered. Positions 730-749 (PPTQSSSDSSPPEVSGPSSS) are enriched in low complexity. The segment covering 750-766 (QMSMKTRRLSSASTGKP) has biased composition (polar residues).

Interacts with TREX complex components THOC2, DDX39 and POLDIP3; the interactions are ATP-dependent. Interacts with PABPN1; this interaction retains ZC3H11A in nuclear speckles. Interacts with KPNA3.

It localises to the nucleus speckle. Functionally, through its association with TREX complex components, may participate in the export and post-transcriptional coordination of selected mRNA transcripts, including those required to maintain the metabolic processes in embryonic cells. Binds RNA. The polypeptide is Zinc finger CCCH domain-containing protein 11A (ZC3H11A) (Pongo abelii (Sumatran orangutan)).